A 610-amino-acid polypeptide reads, in one-letter code: Sulfite reductase [NADPH] flavoprotein alpha-component (610 aa).

The Flavodoxin-like domain occupies 68–206 (IIVISASQTG…EVDKWKEKVV (139 aa)). FMN is bound by residues 74–79 (SQTGNA), 121–124 (STHG), and 157–166 (LGDRSYEYFA). One can recognise an FAD-binding FR-type domain in the interval 243–459 (EFPLIAYLLN…VESNDNFRLP (217 aa)). FAD contacts are provided by residues Thr-331, Ser-365, 397-400 (RFYS), 415-417 (TVS), Tyr-421, and 430-433 (GGAS). Residues 530 to 531 (SR), 536 to 540 (KVYVQ), and Asp-572 contribute to the NADP(+) site. Position 610 (Tyr-610) interacts with FAD.

This sequence belongs to the NADPH-dependent sulphite reductase flavoprotein subunit CysJ family. The protein in the N-terminal section; belongs to the flavodoxin family. It in the C-terminal section; belongs to the flavoprotein pyridine nucleotide cytochrome reductase family. As to quaternary structure, alpha(8)-beta(8). The alpha component is a flavoprotein, the beta component is a hemoprotein. FAD is required as a cofactor. FMN serves as cofactor.

The enzyme catalyses hydrogen sulfide + 3 NADP(+) + 3 H2O = sulfite + 3 NADPH + 4 H(+). Its pathway is sulfur metabolism; hydrogen sulfide biosynthesis; hydrogen sulfide from sulfite (NADPH route): step 1/1. Component of the sulfite reductase complex that catalyzes the 6-electron reduction of sulfite to sulfide. This is one of several activities required for the biosynthesis of L-cysteine from sulfate. The flavoprotein component catalyzes the electron flow from NADPH -&gt; FAD -&gt; FMN to the hemoprotein component. This chain is Sulfite reductase [NADPH] flavoprotein alpha-component, found in Blochmanniella floridana.